The primary structure comprises 214 residues: Octanoyltransferase (214 aa).

Residues Lys-35–Phe-211 enclose the BPL/LPL catalytic domain. Substrate is bound by residues Arg-75–His-82, Ser-142–Gly-144, and Gly-155–Ser-157. Cys-173 (acyl-thioester intermediate) is an active-site residue.

Belongs to the LipB family.

Its subcellular location is the cytoplasm. The enzyme catalyses octanoyl-[ACP] + L-lysyl-[protein] = N(6)-octanoyl-L-lysyl-[protein] + holo-[ACP] + H(+). The protein operates within protein modification; protein lipoylation via endogenous pathway; protein N(6)-(lipoyl)lysine from octanoyl-[acyl-carrier-protein]: step 1/2. Its function is as follows. Catalyzes the transfer of endogenously produced octanoic acid from octanoyl-acyl-carrier-protein onto the lipoyl domains of lipoate-dependent enzymes. Lipoyl-ACP can also act as a substrate although octanoyl-ACP is likely to be the physiological substrate. The polypeptide is Octanoyltransferase (Prochlorococcus marinus subsp. pastoris (strain CCMP1986 / NIES-2087 / MED4)).